The following is a 988-amino-acid chain: Exportin-T (988 aa).

Belongs to the exportin family. In terms of tissue distribution, expressed in young leaves, growing leaf blades, young floral organs and root tips.

The protein resides in the nucleus. The protein localises to the cytoplasm. Its function is as follows. Probable tRNA nucleus export receptor which regulates tRNA processing and facilitates tRNA translocation across the nuclear pore complex. Is required for proper activity of the shoot apical meristem (SAM) and correct leaf initiation at different developmental stages, and may play a role in floral patterning. This is Exportin-T (PSD) from Arabidopsis thaliana (Mouse-ear cress).